A 169-amino-acid chain; its full sequence is Protein kinase-interacting protein PIKP1 (169 aa).

As to quaternary structure, interacts with protein kinase PK1.

Plays a role in the stimulation of the viral kinase PK1 function in very late transcription and in expression of genes required for budded virus production. The polypeptide is Protein kinase-interacting protein PIKP1 (AC24) (Lepidoptera (butterflies and moths)).